The primary structure comprises 310 residues: N-acetyl-gamma-glutamyl-phosphate reductase (310 aa).

Cysteine 117 is a catalytic residue.

It belongs to the NAGSA dehydrogenase family. Type 2 subfamily.

The protein resides in the cytoplasm. The enzyme catalyses N-acetyl-L-glutamate 5-semialdehyde + phosphate + NADP(+) = N-acetyl-L-glutamyl 5-phosphate + NADPH + H(+). It functions in the pathway amino-acid biosynthesis; L-arginine biosynthesis; N(2)-acetyl-L-ornithine from L-glutamate: step 3/4. Its function is as follows. Catalyzes the NADPH-dependent reduction of N-acetyl-5-glutamyl phosphate to yield N-acetyl-L-glutamate 5-semialdehyde. The protein is N-acetyl-gamma-glutamyl-phosphate reductase of Rhizobium etli (strain CIAT 652).